Here is an 828-residue protein sequence, read N- to C-terminus: MLGNLLRNKTSSSGFEKSSEHSDFSSVVPNVPVYCKAASTGTTKTAAGALLDTAVNVEKPSEMLSTTSPPILDHISDDLKLKLFGSRDIPYSRPIDTLQNNGGLGTDKITSINEKTYAFRILIIEEAGQMACRNNYRDIFDYTTSKISNSMEQIRPSELKEYIFGSPVRSSDLTQCDKIRTIPNSDLVLITRIFYYTHQYNRIAISLCIPRILLPVVAESWSSISSWLTQTQKMLIGFLTKNRIMQENTGNYSNNSVIKLSNIDIRTHYPKEIEIMVQTLQKRVIPGLRSMSEIPRLFLYPETFKEFVHVWFKSIFNWIEIKDGPKLGFLPLLMAMIISDYRHTIRELKTSKIVILSGNMVVANKLLFILSALLEPKYKGQITIRRENIRSDSSAVSRNKSNNNFVDKPETELSTLTSTDNLLSRTENNSNHNYNNSNVSSNSIGSPNFHSLRKGWQIPNRRNSNTSVSVSSSESLAEVIQPSSFKSGSSSLHYLSSSISSQPGSYGSWFNKRPTISQFFQPSPSLKHNESWERLQTTAGNMQRTSSSSSLQQATSRLSLTTPQQSPSISEYDEYPWMGTPGSPNVGDVSHAPPLVKNISYKFPLKNVELKRDCQRISQDDLLDEAFERICQPSLADLNSTYEIFPGNSSYADILTTDSDIDDGLMNKPLELLPKYTMYLTHFNNFFQLQACPAGQESESRITNSMKIDLLKADYTRSLLVSLRSRDIRDVALKREFTGNNNNNSNQNIYDENFVGKRKYVLKQKTRKIFSCGKIGKLSTSLENCVNFVENSIKSAMMLYDDNGIDSELRDSEALRIFSSLVHYCNAG.

A disordered region spans residues 1–25; the sequence is MLGNLLRNKTSSSGFEKSSEHSDFS. The uDENN FNIP1/2-type domain occupies 114 to 302; the sequence is EKTYAFRILI…EIPRLFLYPE (189 aa). The 403-residue stretch at 310–712 folds into the cDENN FNIP1/2-type domain; that stretch reads VWFKSIFNWI…TNSMKIDLLK (403 aa). Positions 392–405 are enriched in polar residues; sequence DSSAVSRNKSNNNF. Disordered stretches follow at residues 392–411, 423–444, and 538–569; these read DSSAVSRNKSNNNFVDKPET, LSRTENNSNHNYNNSNVSSNSI, and TAGNMQRTSSSSSLQQATSRLSLTTPQQSPSI. Position 401 is a phosphoserine (Ser401). Residues 543-562 are compositionally biased toward low complexity; the sequence is QRTSSSSSLQQATSRLSLTT. The dDENN FNIP1/2-type domain maps to 718 to 825; it reads SLLVSLRSRD…RIFSSLVHYC (108 aa).

It belongs to the LST4 family.

In terms of biological role, involved in extracellular amino acid uptake. Required for the trafficking of the GAP1 nitrogen-regulated general amino acid permease from the Golgi to the plasma membrane. In Saccharomyces cerevisiae (strain ATCC 204508 / S288c) (Baker's yeast), this protein is Protein LST4 (LST4).